A 552-amino-acid polypeptide reads, in one-letter code: Hyaluronan synthase 2 (552 aa).

The Cytoplasmic portion of the chain corresponds to 1-11 (MHCERFLCVLR). Residues 12-32 (IIGTTLFGVSLLLGITAAYIV) form a helical membrane-spanning segment. At 33–45 (GYQFIQTDNYYFS) the chain is on the extracellular side. The chain crosses the membrane as a helical span at residues 46–66 (FGLYGAFLASHLIIQSLFAFL). Topologically, residues 67–374 (EHRKMKKSLE…NAMWFHKHHL (308 aa)) are cytoplasmic. T110 is modified (phosphothreonine). K190 participates in a covalent cross-link: Glycyl lysine isopeptide (Lys-Gly) (interchain with G-Cter in ubiquitin). The O-linked (GlcNAc) serine glycan is linked to S221. T328 carries the post-translational modification Phosphothreonine. Residues 375 to 395 (WMTYEAVITGFFPFFLIATVI) traverse the membrane as a helical segment. The Extracellular segment spans residues 396–402 (QLFYRGK). A helical transmembrane segment spans residues 403–423 (IWNILLFLLTVQLVGLIKSSF). Residues 424–429 (ASCLRG) are Cytoplasmic-facing. The chain crosses the membrane as a helical span at residues 430–450 (NIVMVFMSLYSVLYMSSLLPA). Residues 451 to 475 (KMFAIATINKAGWGTSGRKTIVVNF) are Extracellular-facing. A helical membrane pass occupies residues 476 to 496 (IGLIPVSVWFTILLGGVIFTI). The Cytoplasmic segment spans residues 497-510 (YKESKKPFSESKQT). A helical membrane pass occupies residues 511 to 531 (VLIVGTLIYACYWVVLLTLYV). The Extracellular portion of the chain corresponds to 532 to 552 (VLINKCGRRKKGQQYDMVLDV).

The protein belongs to the NodC/HAS family. As to quaternary structure, homodimer; dimerization promotes enzymatic activity. Forms heterodimer with HAS3. Forms heterodimer with HAS1. The cofactor is Mg(2+). Post-translationally, phosphorylation at Thr-328 is essential for hyaluronan synthase activity. O-GlcNAcylation at Ser-221 increases the stability of HAS2 and plasma membrane localization. In terms of processing, ubiquitination at Lys-190; this ubiquitination is essential for hyaluronan synthase activity and homo- or hetero-oligomerization. Can also be poly-ubiquitinated. Deubiquitinated by USP17L22/USP17 and USP4. USP17L22/USP17 efficiently removes 'Lys-63'- and 'Lys-48'-linked polyubiquitin chains, whereas USP4 preferentially removes monoubiquitination and, partially, both 'Lys-63'- and 'Lys-48'-linked polyubiquitin chain.

The protein resides in the cell membrane. The protein localises to the endoplasmic reticulum membrane. It localises to the vesicle. It is found in the golgi apparatus membrane. Its subcellular location is the lysosome. The enzyme catalyses [hyaluronan](n) + UDP-N-acetyl-alpha-D-glucosamine = N-acetyl-beta-D-glucosaminyl-(1-&gt;4)-[hyaluronan](n) + UDP + H(+). The catalysed reaction is N-acetyl-beta-D-glucosaminyl-(1-&gt;4)-[hyaluronan](n) + UDP-alpha-D-glucuronate = [hyaluronan](n+1) + UDP + H(+). It participates in glycan biosynthesis; hyaluronan biosynthesis. In terms of biological role, catalyzes the addition of GlcNAc or GlcUA monosaccharides to the nascent hyaluronan polymer. Therefore, it is essential to hyaluronan synthesis a major component of most extracellular matrices that has a structural role in tissues architectures and regulates cell adhesion, migration and differentiation. This is one of three isoenzymes responsible for cellular hyaluronan synthesis and it is particularly responsible for the synthesis of high molecular mass hyaluronan. The protein is Hyaluronan synthase 2 (Has2) of Rattus norvegicus (Rat).